The sequence spans 129 residues: uncharacterized protein (129 aa).

At 1-28 (MAGTLFIILRFVDTTLPSSRVYCVRSLE) the chain is on the cytoplasmic side. A helical membrane pass occupies residues 29 to 49 (VSVAVELAAATVLAFESIGVV). Residues 50–54 (DDCGR) lie on the Extracellular side of the membrane. The helical transmembrane segment at 55–75 (SVLFSIILIAAFICSVFLIAS) threads the bilayer. At 76–129 (EDIAGSRRSTGSCVTLWEGRNISFCLYRSNWLNTVPVGYMFFLRKNRSLDERYF) the chain is on the cytoplasmic side.

The protein localises to the membrane. This is an uncharacterized protein from Saccharomyces cerevisiae (strain ATCC 204508 / S288c) (Baker's yeast).